We begin with the raw amino-acid sequence, 28 residues long: 14-3-3-like protein 4 (28 aa).

The protein belongs to the 14-3-3 family.

This chain is 14-3-3-like protein 4, found in Pseudotsuga menziesii (Douglas-fir).